A 277-amino-acid chain; its full sequence is Sulfate transport system permease protein CysT (277 aa).

Transmembrane regions (helical) follow at residues Leu17 to Met37, Leu64 to Ile84, Leu99 to Phe119, Val136 to Val156, Val188 to Phe205, Val215 to Val235, and Pro243 to Ile263. In terms of domain architecture, ABC transmembrane type-1 spans Tyr60–Ile263.

The protein belongs to the binding-protein-dependent transport system permease family. CysTW subfamily. In terms of assembly, the complex is composed of two ATP-binding proteins (CysA), two transmembrane proteins (CysT and CysW) and a solute-binding protein (CysP).

The protein resides in the cell inner membrane. Its function is as follows. Part of the ABC transporter complex CysAWTP (TC 3.A.1.6.1) involved in sulfate/thiosulfate import. Probably responsible for the translocation of the substrate across the membrane. The polypeptide is Sulfate transport system permease protein CysT (cysU) (Salmonella typhimurium (strain LT2 / SGSC1412 / ATCC 700720)).